The sequence spans 375 residues: Probable sugar phosphate/phosphate translocator At3g17430 (375 aa).

10 helical membrane passes run 9–29 (LVLT…VILY), 43–63 (LPIT…FLLI), 76–96 (FEIY…SLWF), 106–126 (VAFI…MAVV), 140–160 (MLLV…FNIV), 163–183 (VYQV…QVLL), 193–213 (ITSL…PWYV), 229–249 (WIFF…FLVI), 257–276 (IRVA…TVIF), and 280–302 (TITG…YNYI). The segment at 328–348 (EKKSSDKFNPNDSVEIPRVGG) is disordered.

Belongs to the TPT transporter family. TPT (TC 2.A.7.9) subfamily.

The protein localises to the membrane. In Arabidopsis thaliana (Mouse-ear cress), this protein is Probable sugar phosphate/phosphate translocator At3g17430.